We begin with the raw amino-acid sequence, 181 residues long: CASP-like protein 1F1 (181 aa).

Topologically, residues 1–18 (MPNNEAKFSVNQPLKTQK) are cytoplasmic. Residues 19–39 (LFIGVQIFFRIVAIAASVASS) traverse the membrane as a helical segment. At 40–70 (WLMITSKQVIDIGGIVLDARYSYSPEFKFLA) the chain is on the extracellular side. A helical transmembrane segment spans residues 71–91 (FTNIVVGCFSLLSLLFLVLVV). At 92–100 (RQGSNPNHY) the chain is on the cytoplasmic side. A helical membrane pass occupies residues 101–121 (FFLFLHDLAMMSLVVGGCAAA). Residues 122–152 (TTVGFLGKHGNSHTGWMQICDNFGKFCNRAQ) are Extracellular-facing. The chain crosses the membrane as a helical span at residues 153–173 (TSVTISYLNLICLSILTITSA). At 174–181 (SKSRKMEA) the chain is on the cytoplasmic side.

The protein belongs to the Casparian strip membrane proteins (CASP) family. As to quaternary structure, homodimer and heterodimers.

The protein resides in the cell membrane. The chain is CASP-like protein 1F1 from Populus trichocarpa (Western balsam poplar).